An 878-amino-acid polypeptide reads, in one-letter code: DNA mismatch repair protein MutS (878 aa).

618–625 (GPNMGGKS) is a binding site for ATP. Basic and acidic residues-rich tracts occupy residues 800 to 811 (LEEESSRQRAEP) and 863 to 878 (GADK…ARSR). 2 disordered regions span residues 800 to 842 (LEEE…PDEL) and 859 to 878 (SGEE…ARSR).

The protein belongs to the DNA mismatch repair MutS family.

This protein is involved in the repair of mismatches in DNA. It is possible that it carries out the mismatch recognition step. This protein has a weak ATPase activity. The chain is DNA mismatch repair protein MutS from Alkalilimnicola ehrlichii (strain ATCC BAA-1101 / DSM 17681 / MLHE-1).